Consider the following 351-residue polypeptide: uncharacterized protein (351 aa).

Mn(2+)-binding residues include aspartate 215, aspartate 226, histidine 290, glutamate 319, and glutamate 333.

This sequence belongs to the peptidase M24B family. Requires Mn(2+) as cofactor.

This is an uncharacterized protein from Staphylococcus aureus (strain bovine RF122 / ET3-1).